A 298-amino-acid polypeptide reads, in one-letter code: Dioxygenase aneA (298 aa).

Residues His134, Asp136, and His213 each contribute to the Fe cation site.

This sequence belongs to the PhyH family. As to quaternary structure, homodimer. The cofactor is Fe cation.

It carries out the reaction aculene D + 2-oxoglutarate + O2 = aculene C + succinate + CO2 + H2O. The enzyme catalyses aculene B + 2-oxoglutarate + O2 = aculene A + succinate + CO2 + H2O. The protein operates within secondary metabolite biosynthesis. Dioxygenase; part of the gene cluster that mediates the biosynthesis of aculenes, a unique type of norsesquiterpenes that contain a nordaucane skeleton linked to an L-proline moiety and are of mixed biosynthetic origin. The pathway begins with the synthesis of dauca-4,7-diene by the terpene cyclase aneC using farnesyl pyrophosphate (FPP) as substrate. The cytochrome P450 monooxygenase aneF then performs the initial oxidation at C-12 of dauca-4,7-diene to yield asperaculane D. Asperaculane D is substrate of the cytochrome P450 monooxygenase aneD for C-10 hydroxylation to yield asperaculane E. The cytochrome P450 monooxygenase aneG then converts asperaculane E into aculene D via C-2 oxidation. The monomodular nonribosomal peptide synthase aneB adenylates L-proline and the thiohydrolase aneE transfers this activated L-proline derivative to aculenes D and C to produce respectively aculenes B and A. The dioxygenase aneA converts aculene D into aculene C, and aculene B into aculene A by introducing the 5,6-alkene moiety. Asperculanes A, B, C and F, as well as 14-prolyl asperculane C, might be shunt products of the pathway. This is Dioxygenase aneA from Aspergillus aculeatus (strain ATCC 16872 / CBS 172.66 / WB 5094).